Consider the following 158-residue polypeptide: Secreted frizzled-related protein 1 (158 aa).

Residues 1–34 (VRDSCEPVMQFFGFYWPEMLKCDKFPEGDVCIAM) form the FZ domain. N38 carries an N-linked (GlcNAc...) asparagine glycan. 2 disulfides stabilise this stretch: C51-C121 and C68-C123. The 108-residue stretch at 51 to 158 (CPPCDNELKS…IHKWDKKNKE (108 aa)) folds into the NTR domain.

It belongs to the secreted frizzled-related protein (sFRP) family. As to quaternary structure, interacts with WNT4, WNT1, WNT2, WNT8, MYOC and FRZD6.

It is found in the secreted. In terms of biological role, soluble frizzled-related proteins (sFRPS) function as modulators of Wnt signaling through direct interaction with Wnts. They have a role in regulating cell growth and differentiation in specific cell types. SFRP1 decreases intracellular beta-catenin levels. Has antiproliferative effects on vascular cells, in vitro and in vivo, and can induce, in vivo, an angiogenic response. In vascular cell cycle, delays the G1 phase and entry into the S phase. In kidney development, inhibits tubule formation and bud growth in metanephroi. Inhibits WNT1/WNT4-mediated TCF-dependent transcription. This Rattus norvegicus (Rat) protein is Secreted frizzled-related protein 1 (Sfrp1).